The sequence spans 478 residues: Oxidative stress-induced growth inhibitor 1 (478 aa).

Ser12 is subject to Phosphoserine.

It belongs to the OKL38 family. NADPH serves as cofactor.

The protein localises to the midbody. Monooxygenase catalytic activity. Involved in regulation of cytokinesis; promotes RHOA activity, probably acting locally at the midbody in late cytokinesis. Monooxygenase activity is involved in stabilizing transient structures between daughter cells, termed intercellular bridges, before abscission. Regulates differentiation and proliferation through the regulation of cell death. The protein is Oxidative stress-induced growth inhibitor 1 of Mus musculus (Mouse).